Consider the following 160-residue polypeptide: uncharacterized protein (160 aa).

This is an uncharacterized protein from Methanocaldococcus jannaschii (strain ATCC 43067 / DSM 2661 / JAL-1 / JCM 10045 / NBRC 100440) (Methanococcus jannaschii).